We begin with the raw amino-acid sequence, 373 residues long: Flagellar P-ring protein 1 (373 aa).

An N-terminal signal peptide occupies residues 1-25 (MKPINTFFSSFLLALTLGLPATSQA).

Belongs to the FlgI family. In terms of assembly, the basal body constitutes a major portion of the flagellar organelle and consists of four rings (L,P,S, and M) mounted on a central rod.

It is found in the periplasm. Its subcellular location is the bacterial flagellum basal body. Its function is as follows. Assembles around the rod to form the L-ring and probably protects the motor/basal body from shearing forces during rotation. The protein is Flagellar P-ring protein 1 of Vibrio parahaemolyticus serotype O3:K6 (strain RIMD 2210633).